Reading from the N-terminus, the 331-residue chain is Major outer membrane protein P.IB (331 aa).

The N-terminal stretch at 1–19 (MKKSLIALTLAALPVAAMA) is a signal peptide.

It belongs to the Gram-negative porin family. Homotrimer.

It is found in the cell outer membrane. Its function is as follows. Serves as a slightly cation selective porin. This Neisseria meningitidis serogroup B (strain ATCC BAA-335 / MC58) protein is Major outer membrane protein P.IB (porB).